We begin with the raw amino-acid sequence, 443 residues long: 3-isopropylmalate dehydratase large subunit (443 aa).

Positions 347, 407, and 410 each coordinate [4Fe-4S] cluster.

It belongs to the aconitase/IPM isomerase family. LeuC type 1 subfamily. As to quaternary structure, heterodimer of LeuC and LeuD. Requires [4Fe-4S] cluster as cofactor.

The enzyme catalyses (2R,3S)-3-isopropylmalate = (2S)-2-isopropylmalate. It functions in the pathway amino-acid biosynthesis; L-leucine biosynthesis; L-leucine from 3-methyl-2-oxobutanoate: step 2/4. Catalyzes the isomerization between 2-isopropylmalate and 3-isopropylmalate, via the formation of 2-isopropylmaleate. This is 3-isopropylmalate dehydratase large subunit from Buchnera aphidicola subsp. Uroleucon aeneum.